The following is a 745-amino-acid chain: Polyribonucleotide nucleotidyltransferase (745 aa).

Mg(2+)-binding residues include D487 and D493. The KH domain maps to 554–613; that stretch reads PSSTTVKIDKDKIKDIIGPGGKIIKEICETSNAKIDISDDGTVSIYASDRDKIKIALDKI. In terms of domain architecture, S1 motif spans 623–691; that stretch reads GEIFNGTVMK…NKGKAKLTIK (69 aa). Positions 693 to 732 are disordered; the sequence is AYKDHSSNNTKQKNNVKDDSESEQRRDTSKKRTWNEDNNT. Over residues 707–719 the composition is skewed to basic and acidic residues; sequence NVKDDSESEQRRD.

It belongs to the polyribonucleotide nucleotidyltransferase family. Mg(2+) serves as cofactor.

It is found in the cytoplasm. It carries out the reaction RNA(n+1) + phosphate = RNA(n) + a ribonucleoside 5'-diphosphate. Its function is as follows. Involved in mRNA degradation. Catalyzes the phosphorolysis of single-stranded polyribonucleotides processively in the 3'- to 5'-direction. This chain is Polyribonucleotide nucleotidyltransferase, found in Rickettsia prowazekii (strain Madrid E).